Here is a 271-residue protein sequence, read N- to C-terminus: Dihydropteroate synthase type-2 (271 aa).

The 259-residue stretch at M1–A259 folds into the Pterin-binding domain. N12 is a binding site for 4-aminobenzoate. Diphosphate-binding residues include N12, F18, S51, and S52. A Mg(2+)-binding site is contributed by N12. The 7,8-dihydropteroate site is built by S52, D85, N104, D174, F179, K213, and S214. Residues D85, N104, and D174 each coordinate (7,8-dihydropterin-6-yl)methyl diphosphate. Residues N104 and D174 each coordinate 6-hydroxymethyl-7,8-dihydropterin. K213 contacts (7,8-dihydropterin-6-yl)methyl diphosphate. Residue K213 participates in 6-hydroxymethyl-7,8-dihydropterin binding. A 4-aminobenzoate-binding site is contributed by R247. 2 residues coordinate diphosphate: R247 and H249. R247 to H249 is a binding site for (7,8-dihydropterin-6-yl)methyl diphosphate.

The protein belongs to the DHPS family. As to quaternary structure, homodimer. Requires Mg(2+) as cofactor.

The enzyme catalyses (7,8-dihydropterin-6-yl)methyl diphosphate + 4-aminobenzoate = 7,8-dihydropteroate + diphosphate. It participates in cofactor biosynthesis; tetrahydrofolate biosynthesis; 7,8-dihydrofolate from 2-amino-4-hydroxy-6-hydroxymethyl-7,8-dihydropteridine diphosphate and 4-aminobenzoate: step 1/2. Catalyzes the condensation of para-aminobenzoate (pABA) with 6-hydroxymethyl-7,8-dihydropterin diphosphate (DHPt-PP) to form 7,8-dihydropteroate (H2Pte), the immediate precursor of folate derivatives. Confers resistance to sulfonamide antibiotics, including sulfamethoxazole (SMX), sulfadiazine and sulfisoxazole. The type II enzyme is stable whereas type I DHPS loses its activity rapidly. The chain is Dihydropteroate synthase type-2 from Escherichia coli.